Reading from the N-terminus, the 85-residue chain is Antitoxin VapB43 (85 aa).

The disordered stretch occupies residues 37 to 60; that stretch reads GLNPPKPQAAGRYRVQPSGKGGLR.

In terms of biological role, antitoxin component of a type II toxin-antitoxin (TA) system. The chain is Antitoxin VapB43 (vapB43) from Mycobacterium tuberculosis (strain CDC 1551 / Oshkosh).